A 178-amino-acid polypeptide reads, in one-letter code: Large ribosomal subunit protein uL6 (178 aa).

Belongs to the universal ribosomal protein uL6 family. In terms of assembly, part of the 50S ribosomal subunit.

This protein binds to the 23S rRNA, and is important in its secondary structure. It is located near the subunit interface in the base of the L7/L12 stalk, and near the tRNA binding site of the peptidyltransferase center. This is Large ribosomal subunit protein uL6 from Leuconostoc mesenteroides subsp. mesenteroides (strain ATCC 8293 / DSM 20343 / BCRC 11652 / CCM 1803 / JCM 6124 / NCDO 523 / NBRC 100496 / NCIMB 8023 / NCTC 12954 / NRRL B-1118 / 37Y).